A 461-amino-acid polypeptide reads, in one-letter code: Argininosuccinate lyase (461 aa).

This sequence belongs to the lyase 1 family. Argininosuccinate lyase subfamily.

It localises to the cytoplasm. It carries out the reaction 2-(N(omega)-L-arginino)succinate = fumarate + L-arginine. Its pathway is amino-acid biosynthesis; L-arginine biosynthesis; L-arginine from L-ornithine and carbamoyl phosphate: step 3/3. With respect to regulation, strongly inhibited by L-arginine. Inhibitory effects are lowered at pH 7.0 compared to those at pH 8.0. At 45 degrees Celsius and pH 8.0, activity decreases to 94%, 74% and 37% in the presence of 0.6 mM, 2.8 mM and 10 mM arginine, respectively. Activity also decreases to 86% in the presence of 10 mM sodium succinate or sodium citrate. Activity does not decrease in the presence of 1 mM or 10 mM L-lysine, which has a similar structure to arginine. Its function is as follows. Catalyzes the last step of arginine biosynthesis, the conversion of argininosuccinate into L-arginine and fumarate. The polypeptide is Argininosuccinate lyase (Synechocystis sp. (strain ATCC 27184 / PCC 6803 / Kazusa)).